Reading from the N-terminus, the 428-residue chain is L-rhamnose isomerase (428 aa).

Mn(2+) contacts are provided by His-260, Asp-292, and Asp-294.

This sequence belongs to the rhamnose isomerase family. Requires Mn(2+) as cofactor.

It is found in the cytoplasm. The enzyme catalyses L-rhamnopyranose = L-rhamnulose. It functions in the pathway carbohydrate degradation; L-rhamnose degradation; glycerone phosphate from L-rhamnose: step 1/3. In terms of biological role, catalyzes the interconversion of L-rhamnose and L-rhamnulose. The polypeptide is L-rhamnose isomerase (Enterococcus faecalis (strain ATCC 700802 / V583)).